The chain runs to 379 residues: Histidinol-phosphate aminotransferase (379 aa).

Residue Lys236 is modified to N6-(pyridoxal phosphate)lysine.

This sequence belongs to the class-II pyridoxal-phosphate-dependent aminotransferase family. Histidinol-phosphate aminotransferase subfamily. As to quaternary structure, homodimer. Pyridoxal 5'-phosphate serves as cofactor.

The enzyme catalyses L-histidinol phosphate + 2-oxoglutarate = 3-(imidazol-4-yl)-2-oxopropyl phosphate + L-glutamate. The protein operates within amino-acid biosynthesis; L-histidine biosynthesis; L-histidine from 5-phospho-alpha-D-ribose 1-diphosphate: step 7/9. The chain is Histidinol-phosphate aminotransferase from Desulfotalea psychrophila (strain LSv54 / DSM 12343).